A 541-amino-acid chain; its full sequence is Propionate catabolism operon regulatory protein (541 aa).

The 244-residue stretch at 221–464 (IRGQSPQMEQ…RNMMERLALF (244 aa)) folds into the Sigma-54 factor interaction domain. 321–330 (AHGGTLFLDE) contributes to the ATP binding site. A DNA-binding region (H-T-H motif) is located at residues 513 to 532 (KTAAARYLGISRTTLWRRLK).

Its function is as follows. Involved in the transcriptional regulation of the propionate catabolism operon. The polypeptide is Propionate catabolism operon regulatory protein (prpR) (Salmonella typhimurium (strain LT2 / SGSC1412 / ATCC 700720)).